Reading from the N-terminus, the 884-residue chain is Coatomer subunit gamma-1 (884 aa).

HEAT repeat units lie at residues 65–100, 101–138, 286–323, 325–357, and 358–395; these read VEAT…SPSS, DEVI…GTLL, RELA…TRPL, VTNC…TGNE, and SSVD…KFPL. Residues 592–612 form a disordered region; the sequence is QPLQEKKAPGKKPPAGAPAPA. The segment covering 602–612 has biased composition (pro residues); that stretch reads KKPPAGAPAPA.

The protein belongs to the COPG family. Oligomeric complex that consists of at least the alpha, beta, beta', gamma, delta, epsilon and zeta subunits.

The protein resides in the cytoplasm. It localises to the golgi apparatus membrane. The protein localises to the cytoplasmic vesicle. It is found in the COPI-coated vesicle membrane. Functionally, the coatomer is a cytosolic protein complex that binds to dilysine motifs and reversibly associates with Golgi non-clathrin-coated vesicles, which further mediate biosynthetic protein transport from the ER, via the Golgi up to the trans Golgi network. Coatomer complex is required for budding from Golgi membranes, and is essential for the retrograde Golgi-to-ER transport of dilysine-tagged proteins. This chain is Coatomer subunit gamma-1, found in Oryza sativa subsp. japonica (Rice).